The chain runs to 89 residues: Small ribosomal subunit protein uS15 (89 aa).

The protein belongs to the universal ribosomal protein uS15 family. Part of the 30S ribosomal subunit. Forms a bridge to the 50S subunit in the 70S ribosome, contacting the 23S rRNA.

Its function is as follows. One of the primary rRNA binding proteins, it binds directly to 16S rRNA where it helps nucleate assembly of the platform of the 30S subunit by binding and bridging several RNA helices of the 16S rRNA. Functionally, forms an intersubunit bridge (bridge B4) with the 23S rRNA of the 50S subunit in the ribosome. The chain is Small ribosomal subunit protein uS15 from Nitratidesulfovibrio vulgaris (strain DSM 19637 / Miyazaki F) (Desulfovibrio vulgaris).